Reading from the N-terminus, the 656-residue chain is MFARRLRGAGSLAAASLARWQSSKVTGDVIGIDLGTTYSCVAVMEGDKPRVLENTEGFRATPSVVAFKGQEKLVGLAAKRQAVTNPQSTFFAVKRLIGRRFEDSNIQHDIKNVPYKIGRSSNGDAWVQDANGKQYSPSQVGAFVLEKMKETAENFLGRKVSNAVVTCPAYFNGPQRQATKDAGTIAGLNVIRVVNGPTAAALAYGLDKTKDSMIAVYDLGGGTFDISVLEIAGGVFEVKATNGDTHLGGEDFDLCLSDYILTEFKKSTGIDLSNERMALQRIREAAEKAKCELSTTMETEVNLPFITANQDGAQHVQMTVSRSKFESLAEKLVQRSLGPCKQCIKDAAVDLKEISEVVLVGGMTRMPKVIEAVKQFFGRDPFRGVNPDEAVALGGATLGGVLRRDVKGLVLLDVTPLSLGVETLGGVFTRMIPKNTTIPTKKSQTFFSTAAFNQTQVGIKVFQGEREMAADNQMMGQFDLVGIPPAPRGVPQIEVTFDIEPNGICHVTAKDKATGKTQNITITASGGLSKEQIERMIRDSESHAESDRLKRELVEVRNNAETQANTAERQLTEWKYVSDAEKENVRTLLRACRKSMENPNVTKDELSAATDKLQKAVMECGRTEYQQAAAGNSSSSSGNTDSSQGEQQQQGDQQKQ.

Residues 1–23 constitute a mitochondrion transit peptide; the sequence is MFARRLRGAGSLAAASLARWQSS. The segment at 624–656 is disordered; it reads EYQQAAAGNSSSSSGNTDSSQGEQQQQGDQQKQ. The segment covering 626 to 656 has biased composition (low complexity); sequence QQAAAGNSSSSSGNTDSSQGEQQQQGDQQKQ.

It belongs to the heat shock protein 70 family.

Its subcellular location is the mitochondrion matrix. It is found in the kinetoplast. Its function is as follows. May participate in eukaryotic mitochondrial DNA replication. This Trypanosoma cruzi protein is Heat shock 70 kDa protein, mitochondrial (MTP70).